We begin with the raw amino-acid sequence, 148 residues long: Hemoglobin subunit gamma (148 aa).

Residues histidine 3–histidine 148 form the Globin domain. Residues histidine 64 and histidine 93 each coordinate heme b.

It belongs to the globin family. Heterotetramer of two alpha chains and two gamma chains in fetal hemoglobin (Hb F). Red blood cells.

Functionally, gamma chains make up the fetal hemoglobin F, in combination with alpha chains. This Carlito syrichta (Philippine tarsier) protein is Hemoglobin subunit gamma (HBG).